We begin with the raw amino-acid sequence, 74 residues long: MPDNVDFIQEQQAELLERQINAARVKHCGASALVCEECDAPIPAARRAAYPSATRCVSCQSVFEAKNKHYRRTA.

The segment at 35 to 59 (CEECDAPIPAARRAAYPSATRCVSC) adopts a dksA C4-type zinc-finger fold.

This is an uncharacterized protein from Enterobacteriaceae (Bacteriophage P2).